The chain runs to 222 residues: Bone marrow proteoglycan (222 aa).

A signal peptide spans 1–16; sequence MKLPLLLALLFGAVSA. A propeptide spans 17 to 105 (acidic); the sequence is LHLRSETSTF…VKVVGIPGCQ (89 aa). O-linked (GalNAc...) threonine; partial glycosylation is present at threonine 23. O-linked (GalNAc...) serine glycosylation is present at serine 24. Threonine 25 carries O-linked (GalNAc...) threonine glycosylation. Residues 25–75 are disordered; the sequence is TFETPLGAKTLPEDEETPEQEMEETPCRELEEEEEWGSGSEDASKKDGAVE. O-linked (GalNAc...) threonine; partial glycosylation is present at threonine 34. Residues 37–60 show a composition bias toward acidic residues; sequence EDEETPEQEMEETPCRELEEEEEW. The O-linked (Xyl...) (chondroitin sulfate) serine glycan is linked to serine 62. The N-linked (GlcNAc...) asparagine glycan is linked to asparagine 86. Positions 104–222 constitute a C-type lectin domain; that stretch reads CQTCRYLLVR…LRRLPFICSY (119 aa). Disulfide bonds link cysteine 125–cysteine 220 and cysteine 197–cysteine 212.

In terms of assembly, in pregnancy serum, the proform exists as a disulfide-linked 2:2 heterotetramer with PAPPA, as a disulfide-linked 2:2 heterotetramer with AGT, and as a complex (probably a 2:2:2 heterohexamer) with AGT and C3dg. In terms of processing, nitrated. In terms of tissue distribution, detected in plasma and urine (at protein level). Detected in placenta (at protein level). High levels of the proform in placenta and pregnancy serum; in placenta, localized to X cells of septa and anchoring villi. Lower levels in a variety of other tissues including kidney, myometrium, endometrium, ovaries, breast, prostate, bone marrow and colon.

It localises to the secreted. Its subcellular location is the cytoplasmic vesicle. The protein localises to the secretory vesicle. Cytotoxin and helminthotoxin. Also induces non-cytolytic histamine release from human basophils. Involved in antiparasitic defense mechanisms and immune hypersensitivity reactions. The proform acts as a proteinase inhibitor, reducing the activity of PAPPA. The sequence is that of Bone marrow proteoglycan (PRG2) from Homo sapiens (Human).